Here is a 351-residue protein sequence, read N- to C-terminus: Probable protein phosphatase 2C 41 (351 aa).

A PPM-type phosphatase domain is found at 62 to 348 (FTSICSNRGE…DDISVLCLFF (287 aa)). Mn(2+) contacts are provided by Asp-98, Gly-99, Asp-293, and Asp-339.

Belongs to the PP2C family. Mg(2+) serves as cofactor. Mn(2+) is required as a cofactor.

The enzyme catalyses O-phospho-L-seryl-[protein] + H2O = L-seryl-[protein] + phosphate. The catalysed reaction is O-phospho-L-threonyl-[protein] + H2O = L-threonyl-[protein] + phosphate. This is Probable protein phosphatase 2C 41 from Arabidopsis thaliana (Mouse-ear cress).